The following is a 465-amino-acid chain: Protein dml1 (465 aa).

At serine 446 the chain carries Phosphoserine.

This sequence belongs to the misato family.

It localises to the mitochondrion. In terms of biological role, involved in the partitioning of the mitochondrial organelle and mitochondrial DNA (mtDNA) inheritance. This chain is Protein dml1 (dml1), found in Schizosaccharomyces pombe (strain 972 / ATCC 24843) (Fission yeast).